The following is a 208-amino-acid chain: Large ribosomal subunit protein bL25 (208 aa).

The segment at 188-208 (AVETETEEETTTGESPAQPAE) is disordered.

It belongs to the bacterial ribosomal protein bL25 family. CTC subfamily. As to quaternary structure, part of the 50S ribosomal subunit; part of the 5S rRNA/L5/L18/L25 subcomplex. Contacts the 5S rRNA. Binds to the 5S rRNA independently of L5 and L18.

Its function is as follows. This is one of the proteins that binds to the 5S RNA in the ribosome where it forms part of the central protuberance. The sequence is that of Large ribosomal subunit protein bL25 from Moorella thermoacetica (strain ATCC 39073 / JCM 9320).